We begin with the raw amino-acid sequence, 57 residues long: Enolase (57 aa).

Glu25 acts as the Proton donor in catalysis.

The protein belongs to the enolase family. The cofactor is Mg(2+).

The protein resides in the cytoplasm. Its subcellular location is the secreted. It is found in the cell surface. It carries out the reaction (2R)-2-phosphoglycerate = phosphoenolpyruvate + H2O. It functions in the pathway carbohydrate degradation; glycolysis; pyruvate from D-glyceraldehyde 3-phosphate: step 4/5. Functionally, catalyzes the reversible conversion of 2-phosphoglycerate (2-PG) into phosphoenolpyruvate (PEP). It is essential for the degradation of carbohydrates via glycolysis. This is Enolase from Clostridioides difficile (Peptoclostridium difficile).